The chain runs to 288 residues: 4-hydroxy-tetrahydrodipicolinate synthase (288 aa).

A pyruvate-binding site is contributed by T42. Y129 acts as the Proton donor/acceptor in catalysis. K158 serves as the catalytic Schiff-base intermediate with substrate. I200 is a binding site for pyruvate.

This sequence belongs to the DapA family. Homotetramer; dimer of dimers.

Its subcellular location is the cytoplasm. The catalysed reaction is L-aspartate 4-semialdehyde + pyruvate = (2S,4S)-4-hydroxy-2,3,4,5-tetrahydrodipicolinate + H2O + H(+). It functions in the pathway amino-acid biosynthesis; L-lysine biosynthesis via DAP pathway; (S)-tetrahydrodipicolinate from L-aspartate: step 3/4. In terms of biological role, catalyzes the condensation of (S)-aspartate-beta-semialdehyde [(S)-ASA] and pyruvate to 4-hydroxy-tetrahydrodipicolinate (HTPA). The protein is 4-hydroxy-tetrahydrodipicolinate synthase of Thermosipho melanesiensis (strain DSM 12029 / CIP 104789 / BI429).